The following is a 484-amino-acid chain: Glutamyl-tRNA(Gln) amidotransferase subunit A (484 aa).

Catalysis depends on charge relay system residues Lys77 and Ser152. Ser176 acts as the Acyl-ester intermediate in catalysis.

It belongs to the amidase family. GatA subfamily. Heterotrimer of A, B and C subunits.

The catalysed reaction is L-glutamyl-tRNA(Gln) + L-glutamine + ATP + H2O = L-glutaminyl-tRNA(Gln) + L-glutamate + ADP + phosphate + H(+). Its function is as follows. Allows the formation of correctly charged Gln-tRNA(Gln) through the transamidation of misacylated Glu-tRNA(Gln) in organisms which lack glutaminyl-tRNA synthetase. The reaction takes place in the presence of glutamine and ATP through an activated gamma-phospho-Glu-tRNA(Gln). In Pseudomonas aeruginosa (strain ATCC 15692 / DSM 22644 / CIP 104116 / JCM 14847 / LMG 12228 / 1C / PRS 101 / PAO1), this protein is Glutamyl-tRNA(Gln) amidotransferase subunit A.